We begin with the raw amino-acid sequence, 443 residues long: UPF0656 protein C926.02 (443 aa).

The protein belongs to the UPF0656 family.

It localises to the cytoplasm. The protein localises to the nucleus. The protein is UPF0656 protein C926.02 of Schizosaccharomyces pombe (strain 972 / ATCC 24843) (Fission yeast).